The sequence spans 514 residues: 2,3-bisphosphoglycerate-independent phosphoglycerate mutase (514 aa).

Mn(2+) is bound by residues Asp-15 and Ser-65. The Phosphoserine intermediate role is filled by Ser-65. Substrate-binding positions include His-126, 156 to 157, Arg-188, Arg-194, 261 to 264, and Lys-335; these read RD and RADR. Positions 403, 407, 444, 445, and 462 each coordinate Mn(2+).

This sequence belongs to the BPG-independent phosphoglycerate mutase family. Monomer. It depends on Mn(2+) as a cofactor.

It catalyses the reaction (2R)-2-phosphoglycerate = (2R)-3-phosphoglycerate. It participates in carbohydrate degradation; glycolysis; pyruvate from D-glyceraldehyde 3-phosphate: step 3/5. Functionally, catalyzes the interconversion of 2-phosphoglycerate and 3-phosphoglycerate. The protein is 2,3-bisphosphoglycerate-independent phosphoglycerate mutase of Syntrophotalea carbinolica (strain DSM 2380 / NBRC 103641 / GraBd1) (Pelobacter carbinolicus).